Consider the following 1722-residue polypeptide: Lymphocyte antigen 75 (1722 aa).

The signal sequence occupies residues 1–27; the sequence is MRTGWATPRRPAGLLMLLFWFFDLAEP. Topologically, residues 28-1666 are extracellular; sequence SGRAANDPFT…VVCKVPLGPD (1639 aa). Residues 33–156 form the Ricin B-type lectin domain; the sequence is NDPFTIVHGN…ESLCDQPYHE (124 aa). Asparagine 135 carries N-linked (GlcNAc...) asparagine glycosylation. The Fibronectin type-II domain occupies 164-211; the sequence is SYGRPCEFPFLIDGTWHHDCILDEDHSGPWCATTLNYEYDRKWGICLK. 4 cysteine pairs are disulfide-bonded: cysteine 169–cysteine 194, cysteine 183–cysteine 209, cysteine 247–cysteine 340, and cysteine 317–cysteine 332. Positions 225 to 341 constitute a C-type lectin 1 domain; sequence QFGSCYQFNT…CEAQLPYVCR (117 aa). N-linked (GlcNAc...) asparagine glycosylation is found at asparagine 345 and asparagine 377. C-type lectin domains are found at residues 368–486, 493–625, 652–778, and 818–931; these read NNGF…YVCK, NDAS…ICKK, ASLS…IYLR, and IEGS…FICE. 2 disulfides stabilise this stretch: cysteine 389–cysteine 485 and cysteine 462–cysteine 477. The N-linked (GlcNAc...) asparagine glycan is linked to asparagine 529. Cysteine 597 and cysteine 614 form a disulfide bridge. Disulfide bonds link cysteine 840-cysteine 930 and cysteine 904-cysteine 922. Residues asparagine 843 and asparagine 865 are each glycosylated (N-linked (GlcNAc...) asparagine). Tyrosine 933 carries the post-translational modification Phosphotyrosine. Asparagine 934, asparagine 1076, and asparagine 1103 each carry an N-linked (GlcNAc...) asparagine glycan. The C-type lectin 6 domain maps to 958-1091; sequence FQNKCFLKIK…ERHFVSLCQK (134 aa). Cysteine 1060 and cysteine 1080 form a disulfide bridge. The 113-residue stretch at 1110–1222 folds into the C-type lectin 7 domain; sequence YLNNLYKIIP…DNQPGAICYY (113 aa). An intrachain disulfide couples cysteine 1197 to cysteine 1211. Residues asparagine 1225, asparagine 1320, and asparagine 1392 are each glycosylated (N-linked (GlcNAc...) asparagine). The region spanning 1251-1374 is the C-type lectin 8 domain; that stretch reads FQNCCYNFII…VIEEAVYFHQ (124 aa). C-type lectin domains follow at residues 1401–1513 and 1542–1661; these read YEDG…ICYK and YKGH…VCKV. Cysteines 1488 and 1502 form a disulfide. N-linked (GlcNAc...) asparagine glycans are attached at residues asparagine 1593 and asparagine 1626. Cysteine 1635 and cysteine 1650 are disulfide-bonded. A helical transmembrane segment spans residues 1667-1691; the sequence is YTAIAIIVATLSILVLMGGLIWFLF. Residues 1692–1722 lie on the Cytoplasmic side of the membrane; that stretch reads QRHRLHLAGFSSVRYAQGVNEDEIMLPSFHD. A phosphoserine mark is found at serine 1703 and serine 1719.

N-glycosylated. Expressed in spleen, thymus, colon and peripheral blood lymphocytes. Detected in myeloid and B-lymphoid cell lines. Isoform 2 and isoform 3 are expressed in malignant Hodgkin lymphoma cells called Hodgkin and Reed-Sternberg (HRS) cells.

Its subcellular location is the membrane. Acts as an endocytic receptor to direct captured antigens from the extracellular space to a specialized antigen-processing compartment. Causes reduced proliferation of B-lymphocytes. The polypeptide is Lymphocyte antigen 75 (LY75) (Homo sapiens (Human)).